Reading from the N-terminus, the 460-residue chain is Orexin receptor type 2 (460 aa).

At 1 to 54 (MSSTKLEDSLSRRNWSSASELNETQEPFLNPTDYDDEEFLRYLWREYLHPKEYE) the chain is on the extracellular side. 2 N-linked (GlcNAc...) asparagine glycosylation sites follow: N14 and N22. A required for response to orexin-A region spans residues 33-49 (DYDDEEFLRYLWREYLH). A helical transmembrane segment spans residues 55–75 (WVLIAGYIIVFVVALIGNVLV). The Cytoplasmic segment spans residues 76-88 (CVAVWKNHHMRTV). A helical transmembrane segment spans residues 89-110 (TNYFIVNLSLADVLVTITCLPA). Residues 111-127 (TLVVDITETWFFGQSLC) lie on the Extracellular side of the membrane. An intrachain disulfide couples C127 to C210. The chain crosses the membrane as a helical span at residues 128–150 (KVIPYLQTVSVSVSVLTLSCIAL). The Cytoplasmic portion of the chain corresponds to 151 to 170 (DRWYAICHPLMFKSTAKRAR). Residues 171–191 (NSIVVIWIVSCIIMIPQAIVM) form a helical membrane-spanning segment. Residues 192 to 222 (ECSSMLPGLANKTTLFTVCDEHWGGEVYPKM) lie on the Extracellular side of the membrane. N-linked (GlcNAc...) asparagine glycosylation occurs at N202. The chain crosses the membrane as a helical span at residues 223–243 (YHICFFLVTYMAPLCLMILAY). Residues 244 to 304 (LQIFRKLWCR…QIRARRKTAR (61 aa)) lie on the Cytoplasmic side of the membrane. The chain crosses the membrane as a helical span at residues 305–326 (MLMVVLLVFAICYLPISILNVL). Over 327 to 342 (KRVFGMFTHTEDRETV) the chain is Extracellular. A helical membrane pass occupies residues 343–366 (YAWFTFSHWLVYANSAANPIIYNF). At 367–460 (LSGKFREEFK…SSLLSTWLEV (94 aa)) the chain is on the cytoplasmic side.

Belongs to the G-protein coupled receptor 1 family. As to expression, widely expressed. Isoform 2 not detected in skeletal muscle and kidney.

It is found in the cell membrane. Nonselective, high-affinity receptor for both orexin-A and orexin-B neuropeptides. Triggers an increase in cytoplasmic Ca(2+) levels in response to orexin-A binding. The polypeptide is Orexin receptor type 2 (Hcrtr2) (Mus musculus (Mouse)).